Consider the following 466-residue polypeptide: Asparagine--tRNA ligase (466 aa).

Belongs to the class-II aminoacyl-tRNA synthetase family. Homodimer.

The protein localises to the cytoplasm. It carries out the reaction tRNA(Asn) + L-asparagine + ATP = L-asparaginyl-tRNA(Asn) + AMP + diphosphate + H(+). This chain is Asparagine--tRNA ligase, found in Shewanella sp. (strain MR-7).